The following is a 477-amino-acid chain: Regulator of G-protein signaling 7 (477 aa).

Residues 37–112 (EKNGIPIRTV…DDGTFYRFQT (76 aa)) form the DEP domain. Phosphoserine occurs at positions 229 and 241. A disordered region spans residues 236 to 257 (DIRSHSPTHTPTPETKPPTEDE). Residue threonine 243 is modified to Phosphothreonine. Residues 255–316 (EDELHRQIKY…LSDDTTFWEL (62 aa)) form the G protein gamma domain. The region spanning 333–448 (GMDEALKDPV…IRSSAYQELL (116 aa)) is the RGS domain. Phosphoserine is present on serine 434.

In terms of assembly, interacts with GNB5, forming the RGS7-GNB5 complex. Interacts with GPR158; promotes the GTPase activator activity of the RGS7-GNB5 complex in absence of glycine, in contrast GTPase activator activity of the RGS7-GNB5 complex is inhibited in presence of glycine. Interacts with GPR179. Interacts with PKD1; this prevents rapid proteasomal degradation. Interacts with RGS7BP, leading to regulate the subcellular location of the heterodimer formed with GNB5. Interacts (phosphorylated form) with 14-3-3 protein YWHAQ. Interacts with SNAPIN. Interacts with GNAI1. Interacts with GNAO1, GNAI3 and GNAZ. In terms of processing, palmitoylated. Post-translationally, ubiquitinated, leading to rapid proteasomal degradation. Phosphorylation and subsequent interaction with 14-3-3 proteins inhibits GAP activity. As to expression, brain-specific. Predominantly cerebellar granule cells.

It localises to the cytoplasm. It is found in the cytosol. The protein localises to the cell membrane. The protein resides in the membrane. Functionally, GTPase activator component of the RGS7-GNB5 complex that regulates G protein-coupled receptor signaling cascades. The RGS7-GNB5 complex acts as an inhibitor signal transduction by promoting the GTPase activity of G protein alpha subunits, such as GNAO1, thereby driving them into their inactive GDP-bound form. May play a role in synaptic vesicle exocytosis. Glycine-dependent regulation of the RGS7-GNB5 complex by GPR158 affects mood and cognition via its ability to regulate neuronal excitability in L2/L3 pyramidal neurons of the prefrontal cortex. Modulates the activity of potassium channels that are activated by GNAO1 in response to muscarinic acetylcholine receptor M2/CHRM2 signaling. The sequence is that of Regulator of G-protein signaling 7 (Rgs7) from Rattus norvegicus (Rat).